A 728-amino-acid polypeptide reads, in one-letter code: Polyribonucleotide nucleotidyltransferase (728 aa).

Residues D503 and D509 each coordinate Mg(2+). The 60-residue stretch at P570–I629 folds into the KH domain. The region spanning G639 to K713 is the S1 motif domain.

The protein belongs to the polyribonucleotide nucleotidyltransferase family. Mg(2+) serves as cofactor.

The protein localises to the cytoplasm. The catalysed reaction is RNA(n+1) + phosphate = RNA(n) + a ribonucleoside 5'-diphosphate. Its function is as follows. Involved in mRNA degradation. Catalyzes the phosphorolysis of single-stranded polyribonucleotides processively in the 3'- to 5'-direction. In Chlorobium chlorochromatii (strain CaD3), this protein is Polyribonucleotide nucleotidyltransferase.